The following is a 140-amino-acid chain: Sex-regulated protein janus-B (140 aa).

Arg42 contacts substrate. Catalysis depends on His69, which acts as the Proton acceptor. 110 to 112 contacts substrate; sequence SRT.

Belongs to the janus family.

Functionally, janA and janB regulate somatic sex differentiation. This chain is Sex-regulated protein janus-B (janB), found in Drosophila yakuba (Fruit fly).